Here is a 400-residue protein sequence, read N- to C-terminus: NADH-quinone oxidoreductase subunit D (400 aa).

The protein belongs to the complex I 49 kDa subunit family. As to quaternary structure, NDH-1 is composed of 14 different subunits. Subunits NuoB, C, D, E, F, and G constitute the peripheral sector of the complex.

The protein localises to the cell inner membrane. It catalyses the reaction a quinone + NADH + 5 H(+)(in) = a quinol + NAD(+) + 4 H(+)(out). Functionally, NDH-1 shuttles electrons from NADH, via FMN and iron-sulfur (Fe-S) centers, to quinones in the respiratory chain. The immediate electron acceptor for the enzyme in this species is believed to be a menaquinone. Couples the redox reaction to proton translocation (for every two electrons transferred, four hydrogen ions are translocated across the cytoplasmic membrane), and thus conserves the redox energy in a proton gradient. This is NADH-quinone oxidoreductase subunit D from Chlorobaculum tepidum (strain ATCC 49652 / DSM 12025 / NBRC 103806 / TLS) (Chlorobium tepidum).